The chain runs to 256 residues: Alcohol dehydrogenase (256 aa).

12-41 is an NAD(+) binding site; it reads FVAGLGGIGLDTTKELLKRDLKNLVILDRI. Serine 140 is a substrate binding site. The active-site Proton acceptor is the tyrosine 153.

The protein belongs to the short-chain dehydrogenases/reductases (SDR) family. Homodimer.

It carries out the reaction a primary alcohol + NAD(+) = an aldehyde + NADH + H(+). It catalyses the reaction a secondary alcohol + NAD(+) = a ketone + NADH + H(+). This Drosophila ananassae (Fruit fly) protein is Alcohol dehydrogenase.